Consider the following 1489-residue polypeptide: Calmodulin-regulated spectrin-associated protein 2 (1489 aa).

Residues 222–335 (WKLVPARYRK…FMAELFWWFE (114 aa)) enclose the Calponin-homology (CH) domain. Residues 375-415 (SSDFPSSGEGATFTQSHHHLPSRYSRPQAHSSASGGIRRSS) form a disordered region. A compositionally biased stretch (low complexity) spans 405–415 (SSASGGIRRSS). Residues serine 416 and serine 418 each carry the phosphoserine modification. Threonine 426 bears the Phosphothreonine mark. Serine 464, serine 598, serine 599, serine 611, and serine 673 each carry phosphoserine. Disordered regions lie at residues 611–639 (SPITDNTEVDTGIHVPSEDIPETMDEDSS) and 668–730 (TREA…GSEL). Residues 668–679 (TREALSPCPSTV) show a composition bias toward polar residues. Threonine 678 is subject to Phosphothreonine. Serine 680 is subject to Phosphoserine. Over residues 680–699 (STKSQPGSSASSSSGVKMTS) the composition is skewed to low complexity. Over residues 703-713 (QKFRKLNHTDG) the composition is skewed to basic and acidic residues. The stretch at 756–793 (LLASEMVHLRMKLEEKRRAIEAQKKKMEAAFTKQRQKM) forms a coiled coil. Residues 812–844 (LREEAAGAEDEKVYTDRAKEKESQKTDGQRSKS) are disordered. The residue at position 862 (serine 862) is a Phosphoserine. Positions 887–926 (EILEYTKSIEKLNSSLHFLQQEMQRLSLQQEMLMQMREQQ) form a coiled coil. The segment at 922-1034 (MREQQSWVIS…IQTRSFVCFG (113 aa)) is MBD region. The tract at residues 925–1017 (QQSWVISPPQ…SVDSLPRLRR (93 aa)) is disordered. Serine 931 and serine 936 each carry phosphoserine. Over residues 960–989 (SSDSPRPTHPSPQSSNRKSASFSVKSQRTP) the composition is skewed to polar residues. Threonine 997, threonine 1002, and threonine 1004 each carry phosphothreonine. Residues serine 1008 and serine 1019 each carry the phosphoserine modification. Disordered regions lie at residues 1032–1078 (CFGD…PFES), 1096–1152 (PNED…DKEQ), and 1191–1349 (KETQ…EYTG). The segment covering 1039–1075 (PQLKESKPKEEVKKEELESKGTLEQRGHNPEEKEIKP) has biased composition (basic and acidic residues). The span at 1105 to 1117 (TEPPPKPVFPPTA) shows a compositional bias: pro residues. Basic and acidic residues-rich tracts occupy residues 1132 to 1152 (KPPEKADVPVEKYDGESDKEQ) and 1191 to 1252 (KETQ…DTVI). The residue at position 1148 (serine 1148) is a Phosphoserine. The stretch at 1166–1238 (KDDQKAENDM…REFIRQEYMR (73 aa)) forms a coiled coil. Residues 1287–1299 (SSLSLASLNTGDN) are compositionally biased toward polar residues. Residues serine 1313, serine 1319, and serine 1321 each carry the phosphoserine modification. Positions 1334–1346 (NASTTSSVASGTE) are enriched in polar residues. Positions 1349–1483 (GPKLYKEPSA…QTKRPVTPKK (135 aa)) constitute a CKK domain.

The protein belongs to the CAMSAP1 family. As to quaternary structure, interacts with CAMSAP3. Interacts with KATNA1 and KATNB1; leading to regulate the length of CAMSAP2-decorated microtubule stretches. Interacts with a complex formed by AKAP9 and PDE4DIP isoform 13/MMG8/SMYLE, which recruits CAMSAP2 to the Golgi. Interacts with MAPRE1/EB1.

It is found in the cytoplasm. The protein resides in the cytoskeleton. The protein localises to the golgi apparatus. It localises to the cilium basal body. Key microtubule-organizing protein that specifically binds the minus-end of non-centrosomal microtubules and regulates their dynamics and organization. Specifically recognizes growing microtubule minus-ends and autonomously decorates and stabilizes microtubule lattice formed by microtubule minus-end polymerization. Acts on free microtubule minus-ends that are not capped by microtubule-nucleating proteins or other factors and protects microtubule minus-ends from depolymerization. In addition, it also reduces the velocity of microtubule polymerization. Through the microtubule cytoskeleton, also regulates the organization of cellular organelles including the Golgi and the early endosomes. Essential for the tethering, but not for nucleation of non-centrosomal microtubules at the Golgi: together with Golgi-associated proteins AKAP9 and PDE4DIP, required to tether non-centrosomal minus-end microtubules to the Golgi, an important step for polarized cell movement. Also acts as a regulator of neuronal polarity and development: localizes to non-centrosomal microtubule minus-ends in neurons and stabilizes non-centrosomal microtubules, which is required for neuronal polarity, axon specification and dendritic branch formation. Through the microtubule cytoskeleton, regulates the autophagosome transport. This chain is Calmodulin-regulated spectrin-associated protein 2, found in Homo sapiens (Human).